The primary structure comprises 126 residues: Histone H2B type 1-H (126 aa).

Positions 1–12 (MPDPAKSAPAPK) are enriched in low complexity. The tract at residues 1 to 36 (MPDPAKSAPAPKKGSKKAVTKAQKKDGKKRKRSRKE) is disordered. Pro-2 is modified (N-acetylproline). Residue Lys-6 is modified to N6-(2-hydroxyisobutyryl)lysine; alternate. Lys-6 is subject to N6-(beta-hydroxybutyryl)lysine; alternate. Lys-6 bears the N6-acetyllysine; alternate mark. An N6-butyryllysine; alternate modification is found at Lys-6. At Lys-6 the chain carries N6-crotonyllysine; alternate. Lys-6 bears the N6-lactoyllysine; alternate mark. Lys-6 participates in a covalent cross-link: Glycyl lysine isopeptide (Lys-Gly) (interchain with G-Cter in SUMO2); alternate. Ser-7 carries the ADP-ribosylserine modification. Lys-12 is modified (N6-(beta-hydroxybutyryl)lysine; alternate). N6-acetyllysine; alternate occurs at positions 12 and 13. An N6-crotonyllysine; alternate mark is found at Lys-12 and Lys-13. Lys-12 is subject to N6-lactoyllysine; alternate. Lys-13 carries the N6-(2-hydroxyisobutyryl)lysine; alternate modification. Position 15 is a phosphoserine; by STK4/MST1 (Ser-15). An N6-acetyllysine; alternate mark is found at Lys-16, Lys-17, Lys-21, and Lys-24. N6-crotonyllysine; alternate occurs at positions 16, 17, 21, and 24. 4 positions are modified to N6-lactoyllysine; alternate: Lys-16, Lys-17, Lys-21, and Lys-24. An N6-(beta-hydroxybutyryl)lysine; alternate mark is found at Lys-17 and Lys-21. Lys-17 bears the N6-glutaryllysine; alternate mark. Lys-21 and Lys-24 each carry N6-(2-hydroxyisobutyryl)lysine; alternate. N6-butyryllysine; alternate is present on Lys-21. Residue Lys-21 forms a Glycyl lysine isopeptide (Lys-Gly) (interchain with G-Cter in SUMO2); alternate linkage. An N6-(2-hydroxyisobutyryl)lysine modification is found at Lys-25. At Lys-35 the chain carries N6-(2-hydroxyisobutyryl)lysine; alternate. Lys-35 bears the N6-(beta-hydroxybutyryl)lysine; alternate mark. Lys-35 is subject to N6-crotonyllysine; alternate. An N6-glutaryllysine; alternate modification is found at Lys-35. Lys-35 is modified (N6-succinyllysine; alternate). A Glycyl lysine isopeptide (Lys-Gly) (interchain with G-Cter in ubiquitin); alternate cross-link involves residue Lys-35. Glu-36 is subject to PolyADP-ribosyl glutamic acid. Position 37 is a phosphoserine; by AMPK (Ser-37). 3 positions are modified to N6-(2-hydroxyisobutyryl)lysine; alternate: Lys-44, Lys-47, and Lys-58. Lys-44 bears the N6-lactoyllysine; alternate mark. Residues Lys-44 and Lys-47 each carry the N6-glutaryllysine; alternate modification. Lys-47 bears the N6-methyllysine; alternate mark. Position 58 is an N6,N6-dimethyllysine; alternate (Lys-58). Dimethylated arginine is present on Arg-80. Lys-86 is subject to N6-(2-hydroxyisobutyryl)lysine; alternate. At Lys-86 the chain carries N6-(beta-hydroxybutyryl)lysine; alternate. Lys-86 is subject to N6-acetyllysine; alternate. N6-lactoyllysine; alternate is present on Lys-86. Lys-86 bears the N6,N6,N6-trimethyllysine; alternate mark. Omega-N-methylarginine occurs at positions 87 and 93. Residue Lys-109 is modified to N6-(2-hydroxyisobutyryl)lysine; alternate. An N6-lactoyllysine; alternate modification is found at Lys-109. N6-glutaryllysine; alternate is present on Lys-109. Lys-109 carries the N6-methyllysine; alternate modification. Ser-113 carries O-linked (GlcNAc) serine glycosylation. Position 116 is a phosphothreonine (Thr-116). 2 positions are modified to N6-(2-hydroxyisobutyryl)lysine; alternate: Lys-117 and Lys-121. Residues Lys-117 and Lys-121 each carry the N6-(beta-hydroxybutyryl)lysine; alternate modification. Lys-117 and Lys-121 each carry N6-lactoyllysine; alternate. N6-glutaryllysine; alternate occurs at positions 117 and 121. An N6-succinyllysine; alternate mark is found at Lys-117 and Lys-121. Lys-117 is modified (N6-malonyllysine; alternate). Lys-117 is subject to N6-methylated lysine; alternate. Lys-121 participates in a covalent cross-link: Glycyl lysine isopeptide (Lys-Gly) (interchain with G-Cter in ubiquitin); alternate.

It belongs to the histone H2B family. The nucleosome is a histone octamer containing two molecules each of H2A, H2B, H3 and H4 assembled in one H3-H4 heterotetramer and two H2A-H2B heterodimers. The octamer wraps approximately 147 bp of DNA. Found in a complex with PPAR9; DTX3L AND STAT1; the interaction is likely to induce DTX3L-mediated ubiquitination of H2BC9/H2BJ. In terms of processing, monoubiquitination at Lys-35 (H2BK34Ub) by the MSL1/MSL2 dimer is required for histone H3 'Lys-4' (H3K4me) and 'Lys-79' (H3K79me) methylation and transcription activation at specific gene loci, such as HOXA9 and MEIS1 loci. Similarly, monoubiquitination at Lys-121 (H2BK120Ub) by the RNF20/40 complex gives a specific tag for epigenetic transcriptional activation and is also prerequisite for histone H3 'Lys-4' and 'Lys-79' methylation. It also functions cooperatively with the FACT dimer to stimulate elongation by RNA polymerase II. H2BK120Ub also acts as a regulator of mRNA splicing: deubiquitination by USP49 is required for efficient cotranscriptional splicing of a large set of exons. Monoubiquitinated by DTX3L upon encephalomyocarditis virus (EMCV)-mediated infection. Phosphorylation at Ser-37 (H2BS36ph) by AMPK in response to stress promotes transcription. Phosphorylated on Ser-15 (H2BS14ph) by STK4/MST1 during apoptosis; which facilitates apoptotic chromatin condensation. Also phosphorylated on Ser-15 in response to DNA double strand breaks (DSBs), and in correlation with somatic hypermutation and immunoglobulin class-switch recombination. Post-translationally, glcNAcylation at Ser-113 promotes monoubiquitination of Lys-121. It fluctuates in response to extracellular glucose, and associates with transcribed genes. In terms of processing, ADP-ribosylated by PARP1 or PARP2 on Ser-7 (H2BS6ADPr) in response to DNA damage. H2BS6ADPr promotes recruitment of CHD1L. Poly ADP-ribosylation on Glu-36 (H2BE35ADPr) by PARP1 regulates adipogenesis: it inhibits phosphorylation at Ser-37 (H2BS36ph), thereby blocking expression of pro-adipogenetic genes. Crotonylation (Kcr) is specifically present in male germ cells and marks testis-specific genes in post-meiotic cells, including X-linked genes that escape sex chromosome inactivation in haploid cells. Crotonylation marks active promoters and enhancers and confers resistance to transcriptional repressors. It is also associated with post-meiotically activated genes on autosomes. Post-translationally, lactylated in macrophages by EP300/P300 by using lactoyl-CoA directly derived from endogenous or exogenous lactate, leading to stimulates gene transcription.

It is found in the nucleus. The protein localises to the chromosome. Its function is as follows. Core component of nucleosome. Nucleosomes wrap and compact DNA into chromatin, limiting DNA accessibility to the cellular machineries which require DNA as a template. Histones thereby play a central role in transcription regulation, DNA repair, DNA replication and chromosomal stability. DNA accessibility is regulated via a complex set of post-translational modifications of histones, also called histone code, and nucleosome remodeling. In Homo sapiens (Human), this protein is Histone H2B type 1-H.